A 519-amino-acid chain; its full sequence is Putative thymidine phosphorylase (519 aa).

The protein belongs to the thymidine/pyrimidine-nucleoside phosphorylase family. Type 2 subfamily.

The enzyme catalyses thymidine + phosphate = 2-deoxy-alpha-D-ribose 1-phosphate + thymine. This Maricaulis maris (strain MCS10) (Caulobacter maris) protein is Putative thymidine phosphorylase.